A 139-amino-acid chain; its full sequence is ATP synthase epsilon chain (139 aa).

Belongs to the ATPase epsilon chain family. F-type ATPases have 2 components, CF(1) - the catalytic core - and CF(0) - the membrane proton channel. CF(1) has five subunits: alpha(3), beta(3), gamma(1), delta(1), epsilon(1). CF(0) has three main subunits: a, b and c.

It localises to the cell membrane. In terms of biological role, produces ATP from ADP in the presence of a proton gradient across the membrane. This chain is ATP synthase epsilon chain, found in Enterococcus faecalis (strain ATCC 700802 / V583).